The sequence spans 368 residues: D-alanine--D-alanine ligase (368 aa).

Residues 145-348 (KRLLQGAGLH…YQDLITTLIE (204 aa)) form the ATP-grasp domain. Residue 175–230 (ADQLGLPLFIKPANQGSSVGVNKATTEAEFTAAIEEAFSYDHKVLIEAAIKGREIE) participates in ATP binding. Mg(2+) contacts are provided by aspartate 302, glutamate 315, and asparagine 317.

The protein belongs to the D-alanine--D-alanine ligase family. The cofactor is Mg(2+). It depends on Mn(2+) as a cofactor.

Its subcellular location is the cytoplasm. It carries out the reaction 2 D-alanine + ATP = D-alanyl-D-alanine + ADP + phosphate + H(+). It participates in cell wall biogenesis; peptidoglycan biosynthesis. Functionally, cell wall formation. The polypeptide is D-alanine--D-alanine ligase (Shouchella clausii (strain KSM-K16) (Alkalihalobacillus clausii)).